Consider the following 500-residue polypeptide: Oryzalexin D synthase (500 aa).

The helical transmembrane segment at 4-24 (SQMWLLWGALSVALFFYFSTL) threads the bilayer. Residue Cys442 participates in heme binding.

Belongs to the cytochrome P450 family. Heme is required as a cofactor.

The protein resides in the membrane. It catalyses the reaction ent-cassa-12,15-diene + reduced [NADPH--hemoprotein reductase] + O2 = ent-11beta-hydroxycassa-12,15-diene + oxidized [NADPH--hemoprotein reductase] + H2O + H(+). The enzyme catalyses ent-sandaracopimaradien-3beta-ol + reduced [NADPH--hemoprotein reductase] + O2 = oryzalexin D + oxidized [NADPH--hemoprotein reductase] + H2O + H(+). Functionally, enzyme of the diterpenoid metabolism involved in the biosynthesis of both phytocassane and the oryzalexin class of phytoalexins. Can hydroxylate syn-pimaradiene, ent-pimaradiene, ent-sandaracopimaradiene, ent-isokaurene, ent-kaurene, and ent-cassadiene, but no activity with syn-stemodene, syn-stemarene, syn-labdatriene, C11-alpha-hydroxy-ent-cassadiene or syn-pimadien-19-oic acid as substrates. Hydroxylates 3-alpha-hydroxy-ent-sandaracopimaradiene at C-7-beta, resulting in a 3-alpha,7-beta-diol corresponding to oryzalexins D. In Oryza sativa subsp. japonica (Rice), this protein is Oryzalexin D synthase.